Consider the following 365-residue polypeptide: NAC domain-containing protein 37 (365 aa).

One can recognise an NAC domain in the interval 9-158 (VPPGFRFHPT…GWVVCRAFKK (150 aa)). A DNA-binding region spans residues 109–164 (IGMRKTLVFYKGRAPNGKKSDWIMHEYRLESDENAPPQEEGWVVCRAFKKRATGQA).

This sequence belongs to the plant vascular related NAC-domain protein family. In terms of assembly, interacts with NAC030/VND7. In terms of tissue distribution, expressed in root metaxylem pole and in shoot pre-procambium and procambium. Present in root developing xylems. Specifically expressed in vessels but not in interfascicular fibers in stems.

The protein resides in the nucleus. Transcription activator that binds to the secondary wall NAC binding element (SNBE), 5'-(T/A)NN(C/T)(T/C/G)TNNNNNNNA(A/C)GN(A/C/T)(A/T)-3', in the promoter of target genes. Involved in xylem formation by promoting the expression of secondary wall-associated transcription factors and of genes involved in secondary wall biosynthesis and programmed cell death, genes driven by the secondary wall NAC binding element (SNBE). Triggers thickening of secondary walls. In Arabidopsis thaliana (Mouse-ear cress), this protein is NAC domain-containing protein 37.